The sequence spans 49 residues: Large ribosomal subunit protein bL33 (49 aa).

It belongs to the bacterial ribosomal protein bL33 family.

This is Large ribosomal subunit protein bL33 from Streptococcus pyogenes serotype M18 (strain MGAS8232).